A 359-amino-acid chain; its full sequence is Membrane-bound lytic murein transglycosylase C (359 aa).

An N-terminal signal peptide occupies residues 1-16; it reads MKKVLALALIAPLLIS. Cys17 carries the N-palmitoyl cysteine lipid modification. Cys17 carries S-diacylglycerol cysteine lipidation.

The protein belongs to the transglycosylase Slt family.

It localises to the cell outer membrane. It carries out the reaction Exolytic cleavage of the (1-&gt;4)-beta-glycosidic linkage between N-acetylmuramic acid (MurNAc) and N-acetylglucosamine (GlcNAc) residues in peptidoglycan, from either the reducing or the non-reducing ends of the peptidoglycan chains, with concomitant formation of a 1,6-anhydrobond in the MurNAc residue.. In terms of biological role, murein-degrading enzyme. May play a role in recycling of muropeptides during cell elongation and/or cell division. The polypeptide is Membrane-bound lytic murein transglycosylase C (Edwardsiella ictaluri (strain 93-146)).